Consider the following 83-residue polypeptide: Cytochrome b559 subunit alpha (83 aa).

The chain crosses the membrane as a helical span at residues 21–35 (VIHSITIPSLFIAGW). H23 contributes to the heme binding site.

It belongs to the PsbE/PsbF family. As to quaternary structure, heterodimer of an alpha subunit and a beta subunit. PSII is composed of 1 copy each of membrane proteins PsbA, PsbB, PsbC, PsbD, PsbE, PsbF, PsbH, PsbI, PsbJ, PsbK, PsbL, PsbM, PsbT, PsbX, PsbY, PsbZ, Psb30/Ycf12, at least 3 peripheral proteins of the oxygen-evolving complex and a large number of cofactors. It forms dimeric complexes. It depends on heme b as a cofactor.

It localises to the plastid. The protein localises to the chloroplast thylakoid membrane. Its function is as follows. This b-type cytochrome is tightly associated with the reaction center of photosystem II (PSII). PSII is a light-driven water:plastoquinone oxidoreductase that uses light energy to abstract electrons from H(2)O, generating O(2) and a proton gradient subsequently used for ATP formation. It consists of a core antenna complex that captures photons, and an electron transfer chain that converts photonic excitation into a charge separation. This Helianthus annuus (Common sunflower) protein is Cytochrome b559 subunit alpha.